Consider the following 462-residue polypeptide: CD-NTase-associated protein 4 (462 aa).

Residues 1–226 form an N-terminal endonuclease domain region; that stretch reads MSASLLEKQS…FENFICHALE (226 aa). Residues Asp-50, Glu-67, and Lys-69 contribute to the active site. Asp-50 lines the Mg(2+) pocket. The tract at residues 235–462 is C-terminal SAVED domain; the sequence is DPIKINLSAS…QYIPTAELNL (228 aa). 2',3',3'-c-tri-AMP contacts are provided by residues 299–301, Trp-449, and Tyr-454; that span reads KQR.

The protein belongs to the Cap4 nuclease family. In terms of assembly, a monomer in the absence of ligand, in its presence it forms oligomers. Requires a divalent metal cation as cofactor.

DNase activity is activated upon ligand binding. Inhibited by EDTA. Effector DNase of a CBASS antivirus system. CBASS (cyclic oligonucleotide-based antiphage signaling system) provides immunity against bacteriophage. The CD-NTase protein synthesizes cyclic nucleotides in response to infection; these serve as specific second messenger signals. The signals activate a diverse range of effectors, leading to bacterial cell death and thus abortive phage infection. A type II-C(AAAA) CBASS system. In terms of biological role, binds cyclic nucleotide second messengers (synthesized by CdnD, the cognate CD-NTase in the CBASS operon). Ligand binding activates it to endonucleolytically degrade dsDNA to approximately 6 bp length fragments, with a preference for 5'-C or 5'-G cleavage site. The minor product of CdnD is the activating nucleotide; also binds the major product (2',3',3'-cyclic AMP-AMP-AMP) but is not activated by it. Only binds DNA in the presence of ligand. Is not activated by c-di-AMP, c-di-GMP, 3'3'-cyclic GMP-AMP (3'3'-cGAMP) or 3',3',3'-cyclic AMP-AMP-GMP. This chain is CD-NTase-associated protein 4, found in Acinetobacter sp. (strain ATCC 27244 / 9458).